A 268-amino-acid polypeptide reads, in one-letter code: Undecaprenyl-diphosphatase (268 aa).

7 consecutive transmembrane segments (helical) span residues 43–63, 83–103, 109–129, 144–164, 184–204, 218–238, and 246–266; these read FWNT…VVIY, FVIG…IAGK, LFNP…LMWV, FPLP…IPGV, AAEF…AYDF, IVAI…KAFL, and FTFF…ALAL.

It belongs to the UppP family.

Its subcellular location is the cell inner membrane. The enzyme catalyses di-trans,octa-cis-undecaprenyl diphosphate + H2O = di-trans,octa-cis-undecaprenyl phosphate + phosphate + H(+). Catalyzes the dephosphorylation of undecaprenyl diphosphate (UPP). Confers resistance to bacitracin. The protein is Undecaprenyl-diphosphatase of Nitrobacter hamburgensis (strain DSM 10229 / NCIMB 13809 / X14).